The primary structure comprises 254 residues: 3-dehydroquinate dehydratase (254 aa).

3-dehydroquinate contacts are provided by residues 47 to 49 (EFR) and R83. The Proton donor/acceptor role is filled by H144. Residue K171 is the Schiff-base intermediate with substrate of the active site. 3-dehydroquinate-binding residues include R213, S232, and Q236.

This sequence belongs to the type-I 3-dehydroquinase family. In terms of assembly, homodimer.

It catalyses the reaction 3-dehydroquinate = 3-dehydroshikimate + H2O. The protein operates within metabolic intermediate biosynthesis; chorismate biosynthesis; chorismate from D-erythrose 4-phosphate and phosphoenolpyruvate: step 3/7. Involved in the third step of the chorismate pathway, which leads to the biosynthesis of aromatic amino acids. Catalyzes the cis-dehydration of 3-dehydroquinate (DHQ) and introduces the first double bond of the aromatic ring to yield 3-dehydroshikimate. This Neisseria meningitidis serogroup C / serotype 2a (strain ATCC 700532 / DSM 15464 / FAM18) protein is 3-dehydroquinate dehydratase.